The following is a 354-amino-acid chain: D-alanine--D-alanine ligase (354 aa).

The ATP-grasp domain occupies 140-344 (KRLLRDSGLS…ISTLLTRLIM (205 aa)). 170–225 (ADMFGLPFFVKPVNQGSSIGVAKVNDDYSFHSALDIAFFYSHKIIIESCIAGRELE) contributes to the ATP binding site. The Mg(2+) site is built by Asp-298, Glu-311, and Asn-313.

This sequence belongs to the D-alanine--D-alanine ligase family. It depends on Mg(2+) as a cofactor. Mn(2+) is required as a cofactor.

Its subcellular location is the cytoplasm. The catalysed reaction is 2 D-alanine + ATP = D-alanyl-D-alanine + ADP + phosphate + H(+). It participates in cell wall biogenesis; peptidoglycan biosynthesis. Functionally, cell wall formation. The protein is D-alanine--D-alanine ligase of Blochmanniella floridana.